The following is a 110-amino-acid chain: MVKGTPLSGKSLLFALTRLDRNNPEKEWFRTSEIHEVYQTVARDVEVEPKGYNRALELLNKHVTTGVLESKKKERGDQGKFRSYSLQGDVESTRTGLINSTPELQTLMGW.

8 to 12 (SGKSL) lines the ATP pocket.

Belongs to the CDC6/cdc18 family.

Involved in regulation of DNA replication. This Halobacterium salinarum (strain ATCC 700922 / JCM 11081 / NRC-1) (Halobacterium halobium) protein is ORC1-type DNA replication protein 3 (orc3).